A 354-amino-acid polypeptide reads, in one-letter code: Chorismate synthase (354 aa).

Residue arginine 48 coordinates NADP(+). Residues 125-127 (RAS), glycine 277, 292-296 (KPIPS), and arginine 318 contribute to the FMN site.

This sequence belongs to the chorismate synthase family. Homotetramer. It depends on FMNH2 as a cofactor.

The catalysed reaction is 5-O-(1-carboxyvinyl)-3-phosphoshikimate = chorismate + phosphate. It participates in metabolic intermediate biosynthesis; chorismate biosynthesis; chorismate from D-erythrose 4-phosphate and phosphoenolpyruvate: step 7/7. Its function is as follows. Catalyzes the anti-1,4-elimination of the C-3 phosphate and the C-6 proR hydrogen from 5-enolpyruvylshikimate-3-phosphate (EPSP) to yield chorismate, which is the branch point compound that serves as the starting substrate for the three terminal pathways of aromatic amino acid biosynthesis. This reaction introduces a second double bond into the aromatic ring system. The sequence is that of Chorismate synthase from Nitratidesulfovibrio vulgaris (strain DP4) (Desulfovibrio vulgaris).